A 606-amino-acid polypeptide reads, in one-letter code: MSRSSPSLRLPVLLLLLLLLLLPPPPPVLPADPGAPAPVNPCCYFPCQHQGVCVRVALDRYQCDCTRTGYSGPNCTVPDLWTWLRSSLRPSPTFVHYLLTHVRWFWEFVNATFIRDTLMRLVLTVRSNLIPSPPTYNLDYDYISWEAFSNVSYYTRVLPSVPKDCPTPMGTKGKKQLPDAQVLAHRFLLRRTFIPDPQGTNLMFAFFAQHFTHQFFKTSGKMGPGFTKALGHGVDLGHIYGDSLERQYHLRLFKDGKLKYQVLDGEVYPPSVEEAPVLMHYPRGVPPRSQMAVGQEVFGLLPGLMLYATLWLREHNRVCDLLKAEHPTWDDEQLFQTTRLILIGETIKIVIEEYVQQLSGYFLQLKFDPEMLFSVQFQYRNRIAMEFNHLYHWHPLMPDSFQVGSQEYSYEQFLFNTSMLVDYGVEALVDAFSRQSAGRIGGGRNIDHHVLHVAVEVIKESREMRLQPFNEYRKRFGLKPYASFQELTGETEMAAELEELYGDIDALEFYPGLLLEKCQPNSIFGESMIEIGAPFSLKGLLGNPICSPEYWKPSTFGGEVGSNLIKTATLKKLVCLNTKTCPYVSFRVPRSSGDDGPAAERRSTEL.

Positions 1–30 (MSRSSPSLRLPVLLLLLLLLLLPPPPPVLP) are cleaved as a signal peptide. The region spanning 38 to 76 (PVNPCCYFPCQHQGVCVRVALDRYQCDCTRTGYSGPNCT) is the EGF-like domain. Cystine bridges form between cysteine 42-cysteine 53, cysteine 43-cysteine 165, cysteine 47-cysteine 63, and cysteine 65-cysteine 75. Asparagine 74, asparagine 110, and asparagine 150 each carry an N-linked (GlcNAc...) asparagine glycan. The active-site Proton acceptor is histidine 213. The active-site For cyclooxygenase activity is the tyrosine 391. Histidine 394 is a heme b binding site. A glycan (N-linked (GlcNAc...) asparagine) is linked at asparagine 416. Cysteines 575 and 581 form a disulfide.

Belongs to the prostaglandin G/H synthase family. As to quaternary structure, homodimer. Requires heme b as cofactor.

The protein localises to the microsome membrane. Its subcellular location is the endoplasmic reticulum membrane. It catalyses the reaction (5Z,8Z,11Z,14Z)-eicosatetraenoate + AH2 + 2 O2 = prostaglandin H2 + A + H2O. It carries out the reaction (5Z,8Z,11Z,14Z)-eicosatetraenoate + 2 O2 = prostaglandin G2. The enzyme catalyses prostaglandin G2 + AH2 = prostaglandin H2 + A + H2O. The catalysed reaction is (9Z,12Z)-octadecadienoate + AH2 + O2 = (9R)-hydroxy-(10E,12Z)-octadecadienoate + A + H2O. It catalyses the reaction (9Z,12Z)-octadecadienoate + AH2 + O2 = (9S)-hydroxy-(10E,12Z)-octadecadienoate + A + H2O. It carries out the reaction (9Z,12Z)-octadecadienoate + AH2 + O2 = (13S)-hydroxy-(9Z,11E)-octadecadienoate + A + H2O. The enzyme catalyses (9Z,12Z)-octadecadienoate + AH2 + O2 = (13R)-hydroxy-(9Z,11E)-octadecadienoate + A + H2O. The protein operates within lipid metabolism; prostaglandin biosynthesis. Its activity is regulated as follows. The cyclooxygenase activity is inhibited by nonsteroidal anti-inflammatory drugs (NSAIDs) including ibuprofen, flurbiprofen, ketoprofen, naproxen, flurbiprofen, anirolac, fenclofenac and diclofenac. Functionally, dual cyclooxygenase and peroxidase that plays an important role in the biosynthesis pathway of prostanoids, a class of C20 oxylipins mainly derived from arachidonate ((5Z,8Z,11Z,14Z)-eicosatetraenoate, AA, C20:4(n-6)), with a particular role in the inflammatory response. The cyclooxygenase activity oxygenates AA to the hydroperoxy endoperoxide prostaglandin G2 (PGG2), and the peroxidase activity reduces PGG2 to the hydroxy endoperoxide prostaglandin H2 (PGH2), the precursor of all 2-series prostaglandins and thromboxanes. This complex transformation is initiated by abstraction of hydrogen at carbon 13 (with S-stereochemistry), followed by insertion of molecular O2 to form the endoperoxide bridge between carbon 9 and 11 that defines prostaglandins. The insertion of a second molecule of O2 (bis-oxygenase activity) yields a hydroperoxy group in PGG2 that is then reduced to PGH2 by two electrons. Involved in the constitutive production of prostanoids in particular in the stomach and platelets. In gastric epithelial cells, it is a key step in the generation of prostaglandins, such as prostaglandin E2 (PGE2), which plays an important role in cytoprotection. In platelets, it is involved in the generation of thromboxane A2 (TXA2), which promotes platelet activation and aggregation, vasoconstriction and proliferation of vascular smooth muscle cells. Can also use linoleate (LA, (9Z,12Z)-octadecadienoate, C18:2(n-6)) as substrate and produce hydroxyoctadecadienoates (HODEs) in a regio- and stereospecific manner, being (9R)-HODE ((9R)-hydroxy-(10E,12Z)-octadecadienoate) and (13S)-HODE ((13S)-hydroxy-(9Z,11E)-octadecadienoate) its major products. This chain is Prostaglandin G/H synthase 1 (PTGS1), found in Oryctolagus cuniculus (Rabbit).